We begin with the raw amino-acid sequence, 382 residues long: Dual-specificity RNA methyltransferase RlmN (382 aa).

Residue glutamate 91 is the Proton acceptor of the active site. A Radical SAM core domain is found at 97–339 (ETDRGTLCIS…TTVRKTRGDD (243 aa)). An intrachain disulfide couples cysteine 104 to cysteine 344. [4Fe-4S] cluster contacts are provided by cysteine 111, cysteine 115, and cysteine 118. S-adenosyl-L-methionine contacts are provided by residues 165–166 (GE), serine 197, 219–221 (SLH), and asparagine 301. Cysteine 344 acts as the S-methylcysteine intermediate in catalysis.

Belongs to the radical SAM superfamily. RlmN family. It depends on [4Fe-4S] cluster as a cofactor.

It localises to the cytoplasm. The enzyme catalyses adenosine(2503) in 23S rRNA + 2 reduced [2Fe-2S]-[ferredoxin] + 2 S-adenosyl-L-methionine = 2-methyladenosine(2503) in 23S rRNA + 5'-deoxyadenosine + L-methionine + 2 oxidized [2Fe-2S]-[ferredoxin] + S-adenosyl-L-homocysteine. The catalysed reaction is adenosine(37) in tRNA + 2 reduced [2Fe-2S]-[ferredoxin] + 2 S-adenosyl-L-methionine = 2-methyladenosine(37) in tRNA + 5'-deoxyadenosine + L-methionine + 2 oxidized [2Fe-2S]-[ferredoxin] + S-adenosyl-L-homocysteine. Functionally, specifically methylates position 2 of adenine 2503 in 23S rRNA and position 2 of adenine 37 in tRNAs. m2A2503 modification seems to play a crucial role in the proofreading step occurring at the peptidyl transferase center and thus would serve to optimize ribosomal fidelity. The protein is Dual-specificity RNA methyltransferase RlmN of Polaromonas naphthalenivorans (strain CJ2).